Here is a 467-residue protein sequence, read N- to C-terminus: MRLPREIGPIHFVGIGGIGMSGIAEVLCNLGYTVQGSDASDNANVARLREKGITVSVGHKAENVAGADVVVVSTAIKRDNPELMTARAQRIPVVRRAEMLAELMRLKSCVAIAGTHGKTTTTSMVAALLDAGGIDPTVINGGIINAYGTNARLGAGDWMVVEADESDGTFLKLPADVAIVTNVDPEHLDHFKTFDAVQDAFRAFVENVPFYGFAVMCIDHPVVQALVGKIEDRRIITYGVNPQADVRLVDLSPANGSSRFKVVFRDRKSGATHEISDITLPMPGRHNASNATAAIAVAHELGISDEAIRKAIAGFGGVKRRFTRTGEWNGVTIIDDYGHHPVEIAAVLKAARESTSGKVIAVVQPHRYTRLQSLFEEFCTCFNDADAVIVADVYPAGEAPIEGIDRDHFVLGLRAHGHRDVLPLPQAADLAGIVKRLAKSGDLVVCLGAGNITQWAYALPNELKALG.

114-120 (GTHGKTT) is an ATP binding site.

It belongs to the MurCDEF family.

The protein resides in the cytoplasm. It carries out the reaction UDP-N-acetyl-alpha-D-muramate + L-alanine + ATP = UDP-N-acetyl-alpha-D-muramoyl-L-alanine + ADP + phosphate + H(+). It functions in the pathway cell wall biogenesis; peptidoglycan biosynthesis. In terms of biological role, cell wall formation. This chain is UDP-N-acetylmuramate--L-alanine ligase, found in Bradyrhizobium sp. (strain BTAi1 / ATCC BAA-1182).